A 429-amino-acid polypeptide reads, in one-letter code: Uterine milk protein (429 aa).

An N-terminal signal peptide occupies residues 1-25 (MSHRRMQLALSLVFILCGLFNSIFC). N-linked (GlcNAc...) asparagine glycans are attached at residues N222 and N268.

It belongs to the serpin family. UTMP subfamily. In terms of processing, glycosylated; carries the so-called mannose 6-phosphate lysosomal recognition marker on its carbohydrate chains. In terms of tissue distribution, secreted by ovine endometrium under the influence of progesterone.

The polypeptide is Uterine milk protein (Ovis aries (Sheep)).